The following is a 502-amino-acid chain: ATP synthase subunit alpha (502 aa).

169-176 (GDRQTGKT) provides a ligand contact to ATP.

Belongs to the ATPase alpha/beta chains family. In terms of assembly, F-type ATPases have 2 components, CF(1) - the catalytic core - and CF(0) - the membrane proton channel. CF(1) has five subunits: alpha(3), beta(3), gamma(1), delta(1), epsilon(1). CF(0) has three main subunits: a(1), b(2) and c(9-12). The alpha and beta chains form an alternating ring which encloses part of the gamma chain. CF(1) is attached to CF(0) by a central stalk formed by the gamma and epsilon chains, while a peripheral stalk is formed by the delta and b chains.

It localises to the cell inner membrane. The catalysed reaction is ATP + H2O + 4 H(+)(in) = ADP + phosphate + 5 H(+)(out). Produces ATP from ADP in the presence of a proton gradient across the membrane. The alpha chain is a regulatory subunit. This Kosmotoga olearia (strain ATCC BAA-1733 / DSM 21960 / TBF 19.5.1) protein is ATP synthase subunit alpha.